The following is a 398-amino-acid chain: Nuclear egress protein 2 (398 aa).

The Perinuclear space segment spans residues 1-359; that stretch reads MEMNKVLHQD…GPSRPQSGPW (359 aa). 2 disordered regions span residues 202-246 and 306-334; these read ALTR…PPPP and LEEHVSRRRGVSTHHRHPPSPPCTPSLER. Pro residues predominate over residues 215–224; sequence ASPPPPPPRH. The residue at position 216 (Ser-216) is a Phosphoserine. The segment covering 225-240 has biased composition (low complexity); sequence PSCSPTMVAAGGAAAG. A compositionally biased stretch (basic residues) spans 311 to 323; it reads SRRRGVSTHHRHP. A helical membrane pass occupies residues 360 to 382; that stretch reads LPARFATLGPLVLALLLVLALLW. The Nuclear segment spans residues 383-398; sequence RGHGQSSSPTRSAHRD.

Belongs to the herpesviridae NEC2 protein family. As to quaternary structure, forms a heterohexameric complex with NEC1. Interacts with host UBA7 and RNF170; this interaction promotes UBA7 proteasomal degradation. In terms of processing, phosphorylated. Phosphorylation by viral kinase UL97 at Ser-216 plays an important role for correct viral nuclear egress complex (NEC) localization.

It is found in the host nucleus inner membrane. Plays an essential role in virion nuclear egress, the first step of virion release from infected cell. Within the host nucleus, NEC1 interacts with the newly formed capsid through the vertexes and directs it to the inner nuclear membrane by associating with NEC2. Induces the budding of the capsid at the inner nuclear membrane as well as its envelopment into the perinuclear space. There, the NEC1/NEC2 complex promotes the fusion of the enveloped capsid with the outer nuclear membrane and the subsequent release of the viral capsid into the cytoplasm where it will reach the secondary budding sites in the host Golgi or trans-Golgi network. Inhibits host ISGylation and subsequent innate antiviral response by targeting host UBA7 for proteasomal degradation. This is Nuclear egress protein 2 from Homo sapiens (Human).